A 136-amino-acid polypeptide reads, in one-letter code: uncharacterized protein (136 aa).

Helical transmembrane passes span 36 to 56 and 63 to 83; these read FLLTNLVFLFVAFLILIIYLI and FAFAFIATIVFIIFYNILFLS.

It is found in the cell membrane. This is an uncharacterized protein from Mycoplasma pneumoniae (strain ATCC 29342 / M129 / Subtype 1) (Mycoplasmoides pneumoniae).